Here is a 241-residue protein sequence, read N- to C-terminus: UDP-2,3-diacylglucosamine hydrolase (241 aa).

Residues D8, H10, D41, N78, and H113 each coordinate Mn(2+). 78 to 79 (NR) provides a ligand contact to substrate. Substrate is bound by residues D121, S159, N163, K166, and H194. Mn(2+) contacts are provided by H194 and H196.

It belongs to the LpxH family. Requires Mn(2+) as cofactor.

Its subcellular location is the cell inner membrane. It carries out the reaction UDP-2-N,3-O-bis[(3R)-3-hydroxytetradecanoyl]-alpha-D-glucosamine + H2O = 2-N,3-O-bis[(3R)-3-hydroxytetradecanoyl]-alpha-D-glucosaminyl 1-phosphate + UMP + 2 H(+). The protein operates within glycolipid biosynthesis; lipid IV(A) biosynthesis; lipid IV(A) from (3R)-3-hydroxytetradecanoyl-[acyl-carrier-protein] and UDP-N-acetyl-alpha-D-glucosamine: step 4/6. Functionally, hydrolyzes the pyrophosphate bond of UDP-2,3-diacylglucosamine to yield 2,3-diacylglucosamine 1-phosphate (lipid X) and UMP by catalyzing the attack of water at the alpha-P atom. Involved in the biosynthesis of lipid A, a phosphorylated glycolipid that anchors the lipopolysaccharide to the outer membrane of the cell. This chain is UDP-2,3-diacylglucosamine hydrolase, found in Shewanella putrefaciens (strain CN-32 / ATCC BAA-453).